We begin with the raw amino-acid sequence, 318 residues long: MDQDAFILKEDSEVEREAPGGRESLSDVIGFLDAVLSSEPTDIGGDRSWLHNTINTPQGPGSAHRAKSEGEGEVSTPSTQDNRSGEESRVSGRTSKPEAEAHAGNLDKQNIHRAFGGRTGTNSVSQDLGDGGDSGILENPPNERGYPRSGIEDENREMAAHPDKRGEDQAEGLPEEVRGGTSLPDEGEGGASNNGRSMEPGSSHSARVTGVLVIPSPELEEAVLRRNKRRPTNSGSKPLTPATVPGTRSPPLNRYNSTGSPPGKPPSTQDEHINSGDTPAVRVKDRKPPIGTRSVSDCPANGRPIHPGLETDSTKKGA.

Disordered regions lie at residues 1 to 23 (MDQD…GGRE) and 38 to 318 (SEPT…KKGA). Positions 7–20 (ILKEDSEVEREAPG) are enriched in basic and acidic residues. Residues 50–59 (LHNTINTPQG) show a composition bias toward polar residues. A Phosphoserine; by host modification is found at Ser-68. The span at 83-101 (RSGEESRVSGRTSKPEAEA) shows a compositional bias: basic and acidic residues. The residue at position 125 (Ser-125) is a Phosphoserine; by host. The segment covering 150 to 168 (GIEDENREMAAHPDKRGED) has biased composition (basic and acidic residues). Over residues 191-206 (ASNNGRSMEPGSSHSA) the composition is skewed to polar residues. Residues Ser-192, Ser-249, Ser-257, and Ser-260 each carry the phosphoserine; by host modification.

In Sendai virus (strain Fushimi) (SeV), this protein is Protein W (P/V/C).